The sequence spans 103 residues: Small ribosomal subunit protein uS10 (103 aa).

It belongs to the universal ribosomal protein uS10 family. Part of the 30S ribosomal subunit.

Its function is as follows. Involved in the binding of tRNA to the ribosomes. The protein is Small ribosomal subunit protein uS10 of Bordetella petrii (strain ATCC BAA-461 / DSM 12804 / CCUG 43448).